We begin with the raw amino-acid sequence, 383 residues long: ATP phosphoribosyltransferase regulatory subunit (383 aa).

It belongs to the class-II aminoacyl-tRNA synthetase family. HisZ subfamily. Heteromultimer composed of HisG and HisZ subunits.

It is found in the cytoplasm. It functions in the pathway amino-acid biosynthesis; L-histidine biosynthesis; L-histidine from 5-phospho-alpha-D-ribose 1-diphosphate: step 1/9. In terms of biological role, required for the first step of histidine biosynthesis. May allow the feedback regulation of ATP phosphoribosyltransferase activity by histidine. The sequence is that of ATP phosphoribosyltransferase regulatory subunit from Paraburkholderia phymatum (strain DSM 17167 / CIP 108236 / LMG 21445 / STM815) (Burkholderia phymatum).